The chain runs to 563 residues: Kelch repeat and BTB domain-containing protein 1 (563 aa).

A BTB domain is found at 21-88 (CDINIVINDE…IYGIPLSLTN (68 aa)). Positions 123–219 (CIDFYIYADK…SLLSPQVIKS (97 aa)) constitute a BACK domain. 6 Kelch repeats span residues 252–297 (IELI…VMDN), 298–346 (IIYM…VDDE), 347–395 (YIYC…MLNG), 397–441 (IYVI…VHAG), 442–492 (KIYI…SVHN), and 494–540 (LYVG…PIKH).

As to quaternary structure, interacts (via BTB domain) with host CUL3.

The protein localises to the host cytoplasm. Functionally, probable substrate-specific adapter of CUL3-containing E3 ubiquitin-protein ligases which mediate the ubiquitination and subsequent proteasomal degradation of host target proteins. The chain is Kelch repeat and BTB domain-containing protein 1 (KBTB1) from Mus musculus (Mouse).